A 175-amino-acid polypeptide reads, in one-letter code: Ferritin light chain (175 aa).

The residue at position 2 (Ser2) is an N-acetylserine. The region spanning 7 to 156 (QNYSTDVEAA…DHLTNLHRLG (150 aa)) is the Ferritin-like diiron domain. Positions 54, 57, 58, 61, and 64 each coordinate Fe cation. The interval 54-61 (ELAEEKRE) is catalytic site for iron oxidation.

This sequence belongs to the ferritin family. Oligomer of 24 subunits. There are two types of subunits: L (light) chain and H (heavy) chain. The major chain can be light or heavy, depending on the species and tissue type. The functional molecule forms a roughly spherical shell with a diameter of 12 nm and contains a central cavity into which the insoluble mineral iron core is deposited. Interacts with NCOA4.

It is found in the cytoplasmic vesicle. The protein resides in the autophagosome. Its subcellular location is the cytoplasm. It localises to the autolysosome. In terms of biological role, stores iron in a soluble, non-toxic, readily available form. Important for iron homeostasis. Iron is taken up in the ferrous form and deposited as ferric hydroxides after oxidation. Also plays a role in delivery of iron to cells. Mediates iron uptake in capsule cells of the developing kidney. Delivery to lysosomes by the cargo receptor NCOA4 for autophagic degradation and release or iron. This chain is Ferritin light chain (FTL), found in Pongo abelii (Sumatran orangutan).